A 60-amino-acid polypeptide reads, in one-letter code: Small ribosomal subunit protein bS21 (60 aa).

This sequence belongs to the bacterial ribosomal protein bS21 family.

In Mycoplasma pneumoniae (strain ATCC 29342 / M129 / Subtype 1) (Mycoplasmoides pneumoniae), this protein is Small ribosomal subunit protein bS21 (rpsU).